Here is a 393-residue protein sequence, read N- to C-terminus: Messenger RNA-binding inhibitor of apoptosis 1 (393 aa).

Residues 12-76 (ELYIPQKMKA…EKILRDVWRK (65 aa)) are KH 1-like. Residues 79–157 (VQIMIREAAL…MMIECLTEHF (79 aa)) form a KH 2-like region. Positions 259-322 (EKIKQWIPTT…NKEQCQEARN (64 aa)) are KH 3-like. The segment at 328 to 393 (MQSHQDKPAS…LTPRKLSPSD (66 aa)) is disordered. The span at 345–359 (STPGSPFTSDSSSTT) shows a compositional bias: low complexity.

In terms of assembly, may interact with wago-4. In terms of tissue distribution, expressed throughout the germline and in oocytes (at protein level).

The protein resides in the cytoplasm. The protein localises to the perinuclear region. In terms of biological role, RNA-binding protein which binds to its own mRNA and target mRNAs to negatively regulate gene expression to modulate apoptosis and differentiation in the germline. Negatively regulates the expression of the argonaute protein wago-4, and may thus play a role in RNA-mediated gene silencing (RNAi) in the germline. The polypeptide is Messenger RNA-binding inhibitor of apoptosis 1 (Caenorhabditis elegans).